Reading from the N-terminus, the 169-residue chain is Regulator of G-protein signaling rgs-2 (169 aa).

Positions 39-158 (GWSQSFENLM…FLASNIYKTV (120 aa)) constitute an RGS domain.

Post-translationally, may be phosphorylated and activated by egl-4. As to expression, expressed in a subset of neurons including ventral cord and head- and tail-ganglia neurons. Also expressed in non-neuronal cells including pharyngeal and uterine muscles.

Weakly inhibits G protein signaling in nervous system, interacting preferentially with the G(O) subfamily member goa-1. In vitro, it acts as a GTPase activator of goa-1. Rgs-1 and rgs-2 redundantly adjust signaling when worms are fed to allow rapid induction of egg-laying behavior. Modulates chemotaxis responses by regulating negatively the sensitivity to quinine in ASH sensory neurons. This is Regulator of G-protein signaling rgs-2 (rgs-2) from Caenorhabditis elegans.